A 460-amino-acid chain; its full sequence is A-type ATP synthase subunit B (460 aa).

It belongs to the ATPase alpha/beta chains family. In terms of assembly, has multiple subunits with at least A(3), B(3), C, D, E, F, H, I and proteolipid K(x).

The protein localises to the cell membrane. Its function is as follows. Component of the A-type ATP synthase that produces ATP from ADP in the presence of a proton gradient across the membrane. The B chain is a regulatory subunit. This Methanosarcina acetivorans (strain ATCC 35395 / DSM 2834 / JCM 12185 / C2A) protein is A-type ATP synthase subunit B.